The chain runs to 461 residues: MMANILGAGVYSDIFFVAFKLPNLFRRIFAEGSFSQSFLPSFIRSSIKGSFASLVGLIFCIVLFMWCLLVALNPLWLAKLLAYGFDEETLKLCAPIVAINFWYLLLVFITTFLGALLQYKHSFFASAYSASLLNVCMILALLISKEKTHLEALYYLSYGVLLGGVAQILLHFYPLVKLGLLNLLWKGFLSFKTKNAAKKKYRSKRIKRDLKGFFKQFLPSVLGNSSAQIASFLDTTIASFLASGSVSYLYYANRVFQLPLALFAIAISTALFPSIAIALKNNQQDLILQRLQKAWFFLVGVLLLCSIGGIMLSKEITELLFERGQFSPKDTLITSQVFSLYLLGLLPFGLTKLFSLWLYAKLEQKKAAKISLISLFLGLAASLSLMPLLGVLGLALANSLSGLFLFVLTIKAFGFQLFLGIIKNLKSWLVILFLACVEILLLLAFKSWVTHLYLFYYFQGF.

12 helical membrane-spanning segments follow: residues I5–F25, F51–A71, I96–L116, F123–I143, L156–V176, I229–L249, L258–A278, K293–S313, V337–W357, L372–L392, G402–I422, and L429–V449.

Belongs to the MurJ/MviN family.

It is found in the cell inner membrane. It functions in the pathway cell wall biogenesis; peptidoglycan biosynthesis. In terms of biological role, involved in peptidoglycan biosynthesis. Transports lipid-linked peptidoglycan precursors from the inner to the outer leaflet of the cytoplasmic membrane. The polypeptide is Probable lipid II flippase MurJ (Helicobacter pylori (strain ATCC 700392 / 26695) (Campylobacter pylori)).